A 448-amino-acid chain; its full sequence is Tryptophan--tRNA ligase (448 aa).

Residues 10–12 and 18–19 each bind ATP; these read TPT and GN. A 'HIGH' region motif is present at residues 11 to 19; that stretch reads PTGTPHLGN. D143 serves as a coordination point for L-tryptophan. ATP contacts are provided by residues 155-157, L197, and 204-208; these read GRD and KMSKS. The 'KMSKS' region signature appears at 204–208; sequence KMSKS.

This sequence belongs to the class-I aminoacyl-tRNA synthetase family. Homodimer.

The protein localises to the cytoplasm. It carries out the reaction tRNA(Trp) + L-tryptophan + ATP = L-tryptophyl-tRNA(Trp) + AMP + diphosphate + H(+). Functionally, catalyzes the attachment of tryptophan to tRNA(Trp). This Pseudomonas aeruginosa (strain ATCC 15692 / DSM 22644 / CIP 104116 / JCM 14847 / LMG 12228 / 1C / PRS 101 / PAO1) protein is Tryptophan--tRNA ligase.